The sequence spans 391 residues: Histidinol-phosphate aminotransferase (391 aa).

N6-(pyridoxal phosphate)lysine is present on K246.

It belongs to the class-II pyridoxal-phosphate-dependent aminotransferase family. Histidinol-phosphate aminotransferase subfamily. Pyridoxal 5'-phosphate serves as cofactor.

The catalysed reaction is L-histidinol phosphate + 2-oxoglutarate = 3-(imidazol-4-yl)-2-oxopropyl phosphate + L-glutamate. It functions in the pathway amino-acid biosynthesis; L-histidine biosynthesis; L-histidine from 5-phospho-alpha-D-ribose 1-diphosphate: step 7/9. This chain is Histidinol-phosphate aminotransferase, found in Methanopyrus kandleri (strain AV19 / DSM 6324 / JCM 9639 / NBRC 100938).